The sequence spans 476 residues: Glycogen synthase (476 aa).

Position 15 (Lys-15) interacts with ADP-alpha-D-glucose.

The protein belongs to the glycosyltransferase 1 family. Bacterial/plant glycogen synthase subfamily.

The catalysed reaction is [(1-&gt;4)-alpha-D-glucosyl](n) + ADP-alpha-D-glucose = [(1-&gt;4)-alpha-D-glucosyl](n+1) + ADP + H(+). It participates in glycan biosynthesis; glycogen biosynthesis. Functionally, synthesizes alpha-1,4-glucan chains using ADP-glucose. The polypeptide is Glycogen synthase (Streptococcus agalactiae serotype III (strain NEM316)).